Here is a 266-residue protein sequence, read N- to C-terminus: MSADSEFDATDYIQHHLTNLRLDLTEGTIDSEATGFWTLHIDTLIMSFGLGALFCYVFWLAARQATPGVPGGLQNFVEAMIEFIDKTVKETFHAKSKVIAPLALTIFCWVFLSNLMDLVPIDMVPSIMMAVGVDYWKILPSVDLNFTFGLSLSVLALIIIYGVMGQGVGGWLKSWVTHPLGPWLAPANLILNIVEFIAKPVSLSLRLFGNLYAAELVFILISLLPWWIQWALGTPWAIFHILVVPLQAFIFMMLTVVYLAMAYEEH.

The next 7 helical transmembrane spans lie at 41-61 (IDTLIMSFGLGALFCYVFWLA), 98-118 (VIAPLALTIFCWVFLSNLMDL), 119-139 (VPIDMVPSIMMAVGVDYWKIL), 152-172 (LSVLALIIIYGVMGQGVGGWL), 178-198 (HPLGPWLAPANLILNIVEFIA), 216-236 (LVFILISLLPWWIQWALGTPW), and 237-257 (AIFHILVVPLQAFIFMMLTVV).

It belongs to the ATPase A chain family. F-type ATPases have 2 components, CF(1) - the catalytic core - and CF(0) - the membrane proton channel. CF(1) has five subunits: alpha(3), beta(3), gamma(1), delta(1), epsilon(1). CF(0) has three main subunits: a(1), b(2) and c(9-12). The alpha and beta chains form an alternating ring which encloses part of the gamma chain. CF(1) is attached to CF(0) by a central stalk formed by the gamma and epsilon chains, while a peripheral stalk is formed by the delta and b chains.

The protein localises to the cell inner membrane. Key component of the proton channel; it plays a direct role in the translocation of protons across the membrane. This is ATP synthase subunit a from Halorhodospira halophila (strain DSM 244 / SL1) (Ectothiorhodospira halophila (strain DSM 244 / SL1)).